Reading from the N-terminus, the 315-residue chain is Rhomboid-related protein 4 (315 aa).

Residues 1 to 21 (MQRRSRGINTGLILLLSQIFH) are Cytoplasmic-facing. A helical membrane pass occupies residues 22–42 (VGINNIPPVTLATLALNIWFF). The Extracellular portion of the chain corresponds to 43–106 (LNPQKPLYSS…RRLGSRWFAY (64 aa)). Residues 107 to 127 (VITAFSVLTGVVYLLLQFAVA) form a helical membrane-spanning segment. Residues 128 to 138 (EFMDEPDFKRS) lie on the Cytoplasmic side of the membrane. A helical transmembrane segment spans residues 139–157 (CAVGFSGVLFALKVLNNHY). Residue Ser144 is the Nucleophile of the active site. The Extracellular portion of the chain corresponds to 158 to 180 (CPGGFVNILGFPVPNRFACWVEL). A helical membrane pass occupies residues 181–201 (VAIHLFSPGTSFAGHLAGILV). His195 is an active-site residue. Over 202-315 (GLMYTQGPLK…RQRLHRFDSQ (114 aa)) the chain is Cytoplasmic. The segment at 269–284 (SEEEQLERALQASLWD) is ubiquitin-binding domain (UBD). Positions 283–315 (WDRGNTRNSPPPYGFHLSPEEMRRQRLHRFDSQ) are disordered. The span at 300 to 315 (SPEEMRRQRLHRFDSQ) shows a compositional bias: basic and acidic residues. Residues 301 to 315 (PEEMRRQRLHRFDSQ) form a VCP/p97-interacting motif (VIM) region.

Belongs to the peptidase S54 family. Interacts (via C-terminal domain) with VCP. Interacts with ubiquitin and ubiquitinated proteins. Interacts with BIK and STEAP3. As to expression, expressed strongly in testis.

Its subcellular location is the endoplasmic reticulum membrane. It is found in the mitochondrion membrane. It catalyses the reaction Cleaves type-1 transmembrane domains using a catalytic dyad composed of serine and histidine that are contributed by different transmembrane domains.. Its activity is regulated as follows. Inhibited by aprotinin. In terms of biological role, intramembrane-cleaving serine protease that cleaves single transmembrane or multi-pass membrane proteins in the hydrophobic plane of the membrane, luminal loops and juxtamembrane regions. Involved in regulated intramembrane proteolysis and the subsequent release of functional polypeptides from their membrane anchors. Functional component of endoplasmic reticulum-associated degradation (ERAD) for misfolded membrane proteins. Required for the degradation process of some specific misfolded endoplasmic reticulum (ER) luminal proteins. Participates in the transfer of misfolded proteins from the ER to the cytosol, where they are destroyed by the proteasome in a ubiquitin-dependent manner. Functions in BIK, MPZ, PKD1, PTCRA, RHO, STEAP3 and TRAC processing. Involved in the regulation of exosomal secretion; inhibits the TSAP6-mediated secretion pathway. Involved in the regulation of apoptosis; modulates BIK-mediated apoptotic activity. Also plays a role in the regulation of spermatogenesis; inhibits apoptotic activity in spermatogonia. The polypeptide is Rhomboid-related protein 4 (RHBDD1) (Homo sapiens (Human)).